The sequence spans 272 residues: 3-methyl-2-oxobutanoate hydroxymethyltransferase (272 aa).

The Mg(2+) site is built by Asp-52 and Asp-91. Residues 52–53 (DS), Asp-91, and Lys-121 each bind 3-methyl-2-oxobutanoate. Glu-123 provides a ligand contact to Mg(2+). The active-site Proton acceptor is Glu-190.

It belongs to the PanB family. Homodecamer; pentamer of dimers. Mg(2+) is required as a cofactor.

The protein localises to the cytoplasm. It catalyses the reaction 3-methyl-2-oxobutanoate + (6R)-5,10-methylene-5,6,7,8-tetrahydrofolate + H2O = 2-dehydropantoate + (6S)-5,6,7,8-tetrahydrofolate. The protein operates within cofactor biosynthesis; (R)-pantothenate biosynthesis; (R)-pantoate from 3-methyl-2-oxobutanoate: step 1/2. Catalyzes the reversible reaction in which hydroxymethyl group from 5,10-methylenetetrahydrofolate is transferred onto alpha-ketoisovalerate to form ketopantoate. This Cytophaga hutchinsonii (strain ATCC 33406 / DSM 1761 / CIP 103989 / NBRC 15051 / NCIMB 9469 / D465) protein is 3-methyl-2-oxobutanoate hydroxymethyltransferase.